Reading from the N-terminus, the 543-residue chain is Glutamyl-tRNA(Gln) amidotransferase subunit B-1, chloroplastic/mitochondrial (543 aa).

The segment at 1-47 is disordered; it reads MIRAGGPSPSPRGRRAGPIRLPRRAPSSTPTRAKTEEKASADASSRT. The segment covering 12 to 23 has biased composition (basic residues); that stretch reads RGRRAGPIRLPR.

It belongs to the GatB/GatE family. GatB subfamily. In terms of assembly, subunit of the heterotrimeric GatCAB amidotransferase (AdT) complex, composed of A, B and C subunits.

It localises to the mitochondrion. The protein localises to the plastid. It is found in the chloroplast. It carries out the reaction L-glutamyl-tRNA(Gln) + L-glutamine + ATP + H2O = L-glutaminyl-tRNA(Gln) + L-glutamate + ADP + phosphate + H(+). Allows the formation of correctly charged Gln-tRNA(Gln) through the transamidation of misacylated Glu-tRNA(Gln) in chloroplasts and mitochondria. The reaction takes place in the presence of glutamine and ATP through an activated gamma-phospho-Glu-tRNA(Gln). The chain is Glutamyl-tRNA(Gln) amidotransferase subunit B-1, chloroplastic/mitochondrial from Micromonas commoda (strain RCC299 / NOUM17 / CCMP2709) (Picoplanktonic green alga).